The chain runs to 294 residues: Cell division protein ZipA (294 aa).

A topological domain (periplasmic) is located at residue M1. A helical transmembrane segment spans residues 2-22; it reads EIGLREWLILIGIIVIAGILF. Topologically, residues 23–294 are cytoplasmic; the sequence is DGWRRMRGGK…FERRALTQKR (272 aa). Disordered stretches follow at residues 64–111 and 126–146; these read THKE…GDLN and KDDFVADNNRHGAAATPSTPV. Residues 82 to 91 show a composition bias toward basic and acidic residues; the sequence is ARERERDPKP.

This sequence belongs to the ZipA family. Interacts with FtsZ via their C-terminal domains.

The protein resides in the cell inner membrane. In terms of biological role, essential cell division protein that stabilizes the FtsZ protofilaments by cross-linking them and that serves as a cytoplasmic membrane anchor for the Z ring. Also required for the recruitment to the septal ring of downstream cell division proteins. In Pseudomonas entomophila (strain L48), this protein is Cell division protein ZipA.